The sequence spans 516 residues: Probable malate:quinone oxidoreductase (516 aa).

This sequence belongs to the MQO family. Requires FAD as cofactor.

It carries out the reaction (S)-malate + a quinone = a quinol + oxaloacetate. It participates in carbohydrate metabolism; tricarboxylic acid cycle; oxaloacetate from (S)-malate (quinone route): step 1/1. The polypeptide is Probable malate:quinone oxidoreductase (Mycobacterium sp. (strain MCS)).